A 311-amino-acid polypeptide reads, in one-letter code: Aspartate carbamoyltransferase catalytic subunit (311 aa).

Residues Arg55 and Thr56 each contribute to the carbamoyl phosphate site. Lys85 contributes to the L-aspartate binding site. Residues Arg106, His135, and Gln138 each contribute to the carbamoyl phosphate site. Residues Arg168 and Arg230 each coordinate L-aspartate. Carbamoyl phosphate is bound by residues Leu268 and Pro269.

Belongs to the aspartate/ornithine carbamoyltransferase superfamily. ATCase family. As to quaternary structure, heterododecamer (2C3:3R2) of six catalytic PyrB chains organized as two trimers (C3), and six regulatory PyrI chains organized as three dimers (R2).

The enzyme catalyses carbamoyl phosphate + L-aspartate = N-carbamoyl-L-aspartate + phosphate + H(+). It functions in the pathway pyrimidine metabolism; UMP biosynthesis via de novo pathway; (S)-dihydroorotate from bicarbonate: step 2/3. Its function is as follows. Catalyzes the condensation of carbamoyl phosphate and aspartate to form carbamoyl aspartate and inorganic phosphate, the committed step in the de novo pyrimidine nucleotide biosynthesis pathway. This Salmonella paratyphi C (strain RKS4594) protein is Aspartate carbamoyltransferase catalytic subunit.